The sequence spans 392 residues: O-phospho-L-seryl-tRNA:Cys-tRNA synthase 1 (392 aa).

Residues Ala85 to Arg86, Asn190, and Ser213 to His215 contribute to the pyridoxal 5'-phosphate site. Residue Lys216 is modified to N6-(pyridoxal phosphate)lysine.

The protein belongs to the SepCysS family. As to quaternary structure, homodimer. Interacts with SepRS. The cofactor is pyridoxal 5'-phosphate.

The catalysed reaction is O-phospho-L-seryl-tRNA(Cys) + hydrogen sulfide + H(+) = L-cysteinyl-tRNA(Cys) + phosphate. In terms of biological role, converts O-phospho-L-seryl-tRNA(Cys) (Sep-tRNA(Cys)) to L-cysteinyl-tRNA(Cys) (Cys-tRNA(Cys)). This Methanoregula boonei (strain DSM 21154 / JCM 14090 / 6A8) protein is O-phospho-L-seryl-tRNA:Cys-tRNA synthase 1.